Consider the following 809-residue polypeptide: Lethal factor (809 aa).

The signal sequence occupies residues 1–33; it reads MNIKKEFIKVISMSCLVTAITLSGPVFIPLVQG. The tract at residues 39 to 66 is disordered; the sequence is DVGMHVKEKEKNKDENKRKDEERNKTQE. The span at 40-66 shows a compositional bias: basic and acidic residues; it reads VGMHVKEKEKNKDENKRKDEERNKTQE. The segment at 60–295 is i; PA-binding region; the sequence is ERNKTQEEHL…NLSLEELKDQ (236 aa). The 213-residue stretch at 70–282 folds into the ATLF-like 1 domain; sequence KEIMKHIVKI…AFNYMDKFNE (213 aa). Residues 296 to 330 form an IIA region; that stretch reads RMLARYEKWEKIKQHYQHWSDSLSEEGRGLLKKLQ. 5 repeat units span residues 315–333, 342–357, 360–378, 380–397, and 399–416. The 5 X approximate repeats stretch occupies residues 315 to 416; the sequence is SDSLSEEGRG…EFLKKLKLDI (102 aa). Positions 336–416 are III; that stretch reads KKDDIIHSLS…EFLKKLKLDI (81 aa). The IIB stretch occupies residues 420–583; that stretch reads DINQRLQDTG…EYIRIDAKVV (164 aa). The segment at 585–809 is IV; that stretch reads KSKIDTKIQE…NDQIKFIINS (225 aa). The ATLF-like 2 domain occupies 609–804; it reads LPKYTKLITF…TFQFINDQIK (196 aa). Histidine 719 provides a ligand contact to Zn(2+). The active-site Proton acceptor is glutamate 720. Zn(2+)-binding residues include histidine 723, tyrosine 761, and glutamate 768.

Belongs to the peptidase M34 family. Interacts (via ATLF domain 1) with the cleaved form of protective antigen (PA-63) anthrax toxin; interaction is required for LF translocation into the host cytoplasm. Interacts with PA-63 homooligomers (either homoheptamers or homooctamers): three molecules of LF bind the PA-63 homoheptamer to form the PA(7)LF(3) complex, in which the relative position of the N-terminal alpha-helices in the three LFs determines which factor is translocated first. Zn(2+) serves as cofactor.

It localises to the secreted. The protein localises to the host cytoplasm. It is found in the host cytosol. The catalysed reaction is Preferred amino acids around the cleavage site can be denoted BBBBxHx-|-H, in which B denotes Arg or Lys, H denotes a hydrophobic amino acid, and x is any amino acid. The only known protein substrates are mitogen-activated protein (MAP) kinase kinases.. Inhibited by NSC-12155 (1,3-Bis(2-methyl-4-aminoquinoline-6-yl)ure). Inhibited by phenoxyacetic acid bearing alpha-benzyl substituents on the C2-side chain. Inhibited by sulfonamide hydroxamate with benzylic additions at the sulfonamide nitrogen. Also inhibited by sulfonamide hydroxamates with alkylation at the sulfonamide nitrogen. Inhibited by hydroxamic acid inhibitors. Its function is as follows. Lethal factor (LF), which constitutes one of the three proteins composing the anthrax toxin, is able to trigger rapid cell death in macrophages. Acts as a protease that cleaves the N-terminal of most dual specificity mitogen-activated protein kinase kinases (MAPKKs or MAP2Ks) (except for MAP2K5): cleavage invariably occurs within the N-terminal proline-rich region preceding the kinase domain, thus disrupting a sequence involved in directing specific protein-protein interactions necessary for the assembly of signaling complexes. Also cleaves mouse Nlrp1b: host Nlrp1b cleavage promotes ubiquitination and degradation of the N-terminal part of Nlrp1b by the proteasome, thereby releasing the cleaved C-terminal part of Nlrp1b, which polymerizes and forms the Nlrp1b inflammasome followed by host cell pyroptosis. Able to cleave mouse Nlrp1b alleles 1 and 5, while it is not able to cleave Nlrp1b alleles 2, 3 and 4. In contrast, does not cleave NLRP1 human ortholog. LF is not toxic by itself and only acts as a lethal factor when associated with protective antigen (PA) to form the lethal toxin (LeTx): PA is required for LF translocation into the host cytosol. The sequence is that of Lethal factor from Bacillus anthracis.